The primary structure comprises 306 residues: Cytochrome P450 monooxygenase aclO (306 aa).

Residue Cys237 participates in heme binding.

This sequence belongs to the cytochrome P450 family. Heme serves as cofactor.

The protein operates within mycotoxin biosynthesis. Cytochrome P450 monooxygenase; part of the gene cluster that mediates the biosynthesis of aspirochlorine (or antibiotic A30641), an unusual halogenated spiro compound with distinctive antifungal properties due to selective inhibition of protein biosynthesis, and which is also active against bacteria, viruses, and murine tumor cells. The non-ribosomal peptide synthetase (NRPS) aclP is responsible the formation of the diketopiperazine (DKP) core from the condensation of 2 phenylalanine residues. One Phe residue is tailored into chlorotyrosine by hydroxylation and chlorination, whereas the second Phe undergoes an unprecedented C-C bond cleavage to be converted into glycine. After formation of the DKP, sulfur is incorporated into the DKP by conjugation with glutathione by aclG, followed by its stepwise degradation to the thiol by aclI, aclJ and aclK, and the dithiol oxidation by aclT. In addition, oxygenases (aclB, aclC, aclL and aclO) and O-methyltransferases (aclM and aclU) act as tailoring enzymes to produce the intermediate dechloroaspirochlorine. Ultimately, chlorination of dechloroaspirochlorine by the halogenase aclH is the last step in the aspirochlorine pathway. The chain is Cytochrome P450 monooxygenase aclO from Aspergillus oryzae (strain ATCC 42149 / RIB 40) (Yellow koji mold).